Here is a 243-residue protein sequence, read N- to C-terminus: tRNA (guanine-N(7)-)-methyltransferase (243 aa).

Glutamate 74, glutamate 99, aspartate 126, and aspartate 149 together coordinate S-adenosyl-L-methionine. The active site involves aspartate 149. Residues lysine 153, aspartate 185, and 221 to 224 (TKFE) each bind substrate.

Belongs to the class I-like SAM-binding methyltransferase superfamily. TrmB family.

It carries out the reaction guanosine(46) in tRNA + S-adenosyl-L-methionine = N(7)-methylguanosine(46) in tRNA + S-adenosyl-L-homocysteine. It participates in tRNA modification; N(7)-methylguanine-tRNA biosynthesis. Catalyzes the formation of N(7)-methylguanine at position 46 (m7G46) in tRNA. The protein is tRNA (guanine-N(7)-)-methyltransferase of Psychromonas ingrahamii (strain DSM 17664 / CCUG 51855 / 37).